A 236-amino-acid chain; its full sequence is Phosphoribosylformylglycinamidine synthase subunit PurQ (236 aa).

The region spanning 2–234 (RFAVVTFPGS…LSVGLEVAHS (233 aa)) is the Glutamine amidotransferase type-1 domain. Cys-86 functions as the Nucleophile in the catalytic mechanism. Residues His-203 and Glu-205 contribute to the active site.

As to quaternary structure, part of the FGAM synthase complex composed of 1 PurL, 1 PurQ and 2 PurS subunits.

The protein localises to the cytoplasm. It catalyses the reaction N(2)-formyl-N(1)-(5-phospho-beta-D-ribosyl)glycinamide + L-glutamine + ATP + H2O = 2-formamido-N(1)-(5-O-phospho-beta-D-ribosyl)acetamidine + L-glutamate + ADP + phosphate + H(+). It carries out the reaction L-glutamine + H2O = L-glutamate + NH4(+). It participates in purine metabolism; IMP biosynthesis via de novo pathway; 5-amino-1-(5-phospho-D-ribosyl)imidazole from N(2)-formyl-N(1)-(5-phospho-D-ribosyl)glycinamide: step 1/2. Part of the phosphoribosylformylglycinamidine synthase complex involved in the purines biosynthetic pathway. Catalyzes the ATP-dependent conversion of formylglycinamide ribonucleotide (FGAR) and glutamine to yield formylglycinamidine ribonucleotide (FGAM) and glutamate. The FGAM synthase complex is composed of three subunits. PurQ produces an ammonia molecule by converting glutamine to glutamate. PurL transfers the ammonia molecule to FGAR to form FGAM in an ATP-dependent manner. PurS interacts with PurQ and PurL and is thought to assist in the transfer of the ammonia molecule from PurQ to PurL. The sequence is that of Phosphoribosylformylglycinamidine synthase subunit PurQ from Thermomicrobium roseum (strain ATCC 27502 / DSM 5159 / P-2).